A 465-amino-acid chain; its full sequence is GTPase Der (465 aa).

2 EngA-type G domains span residues 3–167 (PLVA…PEEG) and 179–352 (IRIA…ESAN). GTP-binding positions include 9–16 (GRPNVGKS), 57–61 (DTGGI), 119–122 (NKID), 185–192 (GRPNVGKS), 232–236 (DTAGL), and 297–300 (NKWD). Residues 353–437 (KTFTTSEVNK…PVSFIFREGT (85 aa)) form the KH-like domain.

This sequence belongs to the TRAFAC class TrmE-Era-EngA-EngB-Septin-like GTPase superfamily. EngA (Der) GTPase family. In terms of assembly, associates with the 50S ribosomal subunit.

Functionally, GTPase that plays an essential role in the late steps of ribosome biogenesis. The polypeptide is GTPase Der (Stenotrophomonas maltophilia (strain R551-3)).